The sequence spans 269 residues: Formamidopyrimidine-DNA glycosylase (269 aa).

P2 acts as the Schiff-base intermediate with DNA in catalysis. E3 functions as the Proton donor in the catalytic mechanism. The active-site Proton donor; for beta-elimination activity is K57. Positions 90, 109, and 150 each coordinate DNA. The FPG-type zinc finger occupies 235–269 (QVYGRGGEPCRVCGTPIQMAKHGQRSTFFCPACQH). R259 serves as the catalytic Proton donor; for delta-elimination activity.

The protein belongs to the FPG family. As to quaternary structure, monomer. Requires Zn(2+) as cofactor.

The catalysed reaction is Hydrolysis of DNA containing ring-opened 7-methylguanine residues, releasing 2,6-diamino-4-hydroxy-5-(N-methyl)formamidopyrimidine.. The enzyme catalyses 2'-deoxyribonucleotide-(2'-deoxyribose 5'-phosphate)-2'-deoxyribonucleotide-DNA = a 3'-end 2'-deoxyribonucleotide-(2,3-dehydro-2,3-deoxyribose 5'-phosphate)-DNA + a 5'-end 5'-phospho-2'-deoxyribonucleoside-DNA + H(+). Its function is as follows. Involved in base excision repair of DNA damaged by oxidation or by mutagenic agents. Acts as a DNA glycosylase that recognizes and removes damaged bases. Has a preference for oxidized purines, such as 7,8-dihydro-8-oxoguanine (8-oxoG). Has AP (apurinic/apyrimidinic) lyase activity and introduces nicks in the DNA strand. Cleaves the DNA backbone by beta-delta elimination to generate a single-strand break at the site of the removed base with both 3'- and 5'-phosphates. The chain is Formamidopyrimidine-DNA glycosylase from Sodalis glossinidius (strain morsitans).